Consider the following 186-residue polypeptide: Ribosome-recycling factor (186 aa).

It belongs to the RRF family.

It localises to the cytoplasm. Its function is as follows. Responsible for the release of ribosomes from messenger RNA at the termination of protein biosynthesis. May increase the efficiency of translation by recycling ribosomes from one round of translation to another. The chain is Ribosome-recycling factor from Bacteroides thetaiotaomicron (strain ATCC 29148 / DSM 2079 / JCM 5827 / CCUG 10774 / NCTC 10582 / VPI-5482 / E50).